The primary structure comprises 263 residues: Elongin-A (263 aa).

2 disordered regions span residues 112–147 and 170–263; these read KLEQ…YCPK and SATS…PKRI. Polar residues-rich tracts occupy residues 186-206 and 214-229; these read RSSS…NTYP and SFTS…VKTQ. Residues 230 to 245 show a composition bias toward low complexity; that stretch reads PSSSSSPSISRPTSFP. Positions 253–263 are enriched in polar residues; it reads SRFSSQVPKRI.

It belongs to the ELA1 family. Heterodimer with elc1. Component of a CRL3 E3 ubiquitin ligase complex consisting of a cullin, the linker protein elc1, the substrate receptor pof4/ela1, and the RING protein rbx1. Interacts with skp1.

Its function is as follows. As part of the CRL3 E3 ubiquitin ligase complex; polyubiquitylates monoubiquitylated RNA polymerase II subunit rpb1 to trigger its proteolysis; plays a role in global genomic repair. This is Elongin-A (pof4) from Schizosaccharomyces pombe (strain 972 / ATCC 24843) (Fission yeast).